A 350-amino-acid polypeptide reads, in one-letter code: uncharacterized protein (350 aa).

This is an uncharacterized protein from Methanocaldococcus jannaschii (strain ATCC 43067 / DSM 2661 / JAL-1 / JCM 10045 / NBRC 100440) (Methanococcus jannaschii).